We begin with the raw amino-acid sequence, 86 residues long: Apolipoprotein C-I (86 aa).

A signal peptide spans 1-26 (MRLFLSLPVLVVALLMILEGPGPAQG).

The protein belongs to the apolipoprotein C1 family.

The protein resides in the secreted. Its function is as follows. Inhibitor of lipoprotein binding to the low density lipoprotein (LDL) receptor, LDL receptor-related protein, and very low density lipoprotein (VLDL) receptor. Associates with high density lipoproteins (HDL) and the triacylglycerol-rich lipoproteins in the plasma and makes up about 10% of the protein of the VLDL and 2% of that of HDL. Appears to interfere directly with fatty acid uptake and is also the major plasma inhibitor of cholesteryl ester transfer protein (CETP). Binds free fatty acids and reduces their intracellular esterification. Modulates the interaction of APOE with beta-migrating VLDL and inhibits binding of beta-VLDL to the LDL receptor-related protein. In Aotus nancymaae (Ma's night monkey), this protein is Apolipoprotein C-I (APOC1).